Consider the following 213-residue polypeptide: A-type ATP synthase subunit D (213 aa).

Belongs to the V-ATPase D subunit family. As to quaternary structure, has multiple subunits with at least A(3), B(3), C, D, E, F, H, I and proteolipid K(x).

The protein localises to the cell membrane. Component of the A-type ATP synthase that produces ATP from ADP in the presence of a proton gradient across the membrane. This is A-type ATP synthase subunit D from Thermoplasma acidophilum (strain ATCC 25905 / DSM 1728 / JCM 9062 / NBRC 15155 / AMRC-C165).